The following is a 292-amino-acid chain: GTP cyclohydrolase FolE2 (292 aa).

The protein belongs to the GTP cyclohydrolase IV family.

It carries out the reaction GTP + H2O = 7,8-dihydroneopterin 3'-triphosphate + formate + H(+). Its pathway is cofactor biosynthesis; 7,8-dihydroneopterin triphosphate biosynthesis; 7,8-dihydroneopterin triphosphate from GTP: step 1/1. Functionally, converts GTP to 7,8-dihydroneopterin triphosphate. The sequence is that of GTP cyclohydrolase FolE2 from Macrococcus caseolyticus (strain JCSC5402) (Macrococcoides caseolyticum).